The following is a 426-amino-acid chain: Enolase 1 (426 aa).

Gln162 is a binding site for (2R)-2-phosphoglycerate. Glu204 functions as the Proton donor in the catalytic mechanism. The Mg(2+) site is built by Asp241, Glu284, and Asp311. (2R)-2-phosphoglycerate is bound by residues Lys336, Arg365, Ser366, and Lys387. Lys336 serves as the catalytic Proton acceptor.

Belongs to the enolase family. Mg(2+) is required as a cofactor.

Its subcellular location is the cytoplasm. The protein resides in the secreted. It is found in the cell surface. The catalysed reaction is (2R)-2-phosphoglycerate = phosphoenolpyruvate + H2O. It functions in the pathway carbohydrate degradation; glycolysis; pyruvate from D-glyceraldehyde 3-phosphate: step 4/5. Catalyzes the reversible conversion of 2-phosphoglycerate (2-PG) into phosphoenolpyruvate (PEP). It is essential for the degradation of carbohydrates via glycolysis. This Methanospirillum hungatei JF-1 (strain ATCC 27890 / DSM 864 / NBRC 100397 / JF-1) protein is Enolase 1.